The sequence spans 447 residues: Probable protein phosphatase 2C 71 (447 aa).

The 247-residue stretch at 33–279 (SYGYASSAGK…DNITCVVVRF (247 aa)) folds into the PPM-type phosphatase domain. Residues Asp69, Gly70, Asp231, and Asp270 each contribute to the Mn(2+) site. Over residues 284-297 (SANNNGSSSSEEAN) the composition is skewed to low complexity. The interval 284–447 (SANNNGSSSS…ARKTTPSIFN (164 aa)) is disordered. A compositionally biased stretch (basic and acidic residues) spans 305–331 (NDSDHKISAKETNQDHTTVNKDLDRNT). Composition is skewed to polar residues over residues 346–374 (ADNS…TGEK) and 392–423 (KVPN…GSTG). The segment covering 424-438 (ERNRKPIKVHSDSAA) has biased composition (basic and acidic residues).

Belongs to the PP2C family. Mg(2+) serves as cofactor. It depends on Mn(2+) as a cofactor.

The enzyme catalyses O-phospho-L-seryl-[protein] + H2O = L-seryl-[protein] + phosphate. It carries out the reaction O-phospho-L-threonyl-[protein] + H2O = L-threonyl-[protein] + phosphate. The chain is Probable protein phosphatase 2C 71 from Arabidopsis thaliana (Mouse-ear cress).